A 237-amino-acid chain; its full sequence is Transcriptional regulatory protein YvrH (237 aa).

The region spanning 5–119 is the Response regulatory domain; that stretch reads SILIVDDEKA…ELAARIRAHL (115 aa). Asp55 carries the post-translational modification 4-aspartylphosphate. Positions 131–230 form a DNA-binding region, ompR/PhoB-type; it reads NQTYTYDYFT…VRGLGYRFIP (100 aa).

In terms of processing, phosphorylated by YvrG.

It localises to the cytoplasm. Functionally, member of the two-component regulatory system YvrG/YvrH that positively regulates 7 transcriptional units (wprA, wapA-yxxG, dltABCDE, sunA, sunT-bdbA-yolJ-bdbB, sigO-rsoA, and sigX-rsiX), and negatively regulates the lytABC operon. This is Transcriptional regulatory protein YvrH (yvrH) from Bacillus subtilis (strain 168).